We begin with the raw amino-acid sequence, 232 residues long: Large ribosomal subunit protein uL1 (232 aa).

Belongs to the universal ribosomal protein uL1 family. As to quaternary structure, part of the 50S ribosomal subunit.

In terms of biological role, binds directly to 23S rRNA. The L1 stalk is quite mobile in the ribosome, and is involved in E site tRNA release. Protein L1 is also a translational repressor protein, it controls the translation of the L11 operon by binding to its mRNA. The sequence is that of Large ribosomal subunit protein uL1 from Parabacteroides distasonis (strain ATCC 8503 / DSM 20701 / CIP 104284 / JCM 5825 / NCTC 11152).